A 402-amino-acid polypeptide reads, in one-letter code: Tryptophan synthase beta chain (402 aa).

An N6-(pyridoxal phosphate)lysine modification is found at lysine 92.

This sequence belongs to the TrpB family. As to quaternary structure, tetramer of two alpha and two beta chains. Pyridoxal 5'-phosphate is required as a cofactor.

The catalysed reaction is (1S,2R)-1-C-(indol-3-yl)glycerol 3-phosphate + L-serine = D-glyceraldehyde 3-phosphate + L-tryptophan + H2O. The protein operates within amino-acid biosynthesis; L-tryptophan biosynthesis; L-tryptophan from chorismate: step 5/5. The beta subunit is responsible for the synthesis of L-tryptophan from indole and L-serine. This Staphylococcus epidermidis (strain ATCC 35984 / DSM 28319 / BCRC 17069 / CCUG 31568 / BM 3577 / RP62A) protein is Tryptophan synthase beta chain.